Here is a 157-residue protein sequence, read N- to C-terminus: SsrA-binding protein (157 aa).

It belongs to the SmpB family.

It localises to the cytoplasm. Functionally, required for rescue of stalled ribosomes mediated by trans-translation. Binds to transfer-messenger RNA (tmRNA), required for stable association of tmRNA with ribosomes. tmRNA and SmpB together mimic tRNA shape, replacing the anticodon stem-loop with SmpB. tmRNA is encoded by the ssrA gene; the 2 termini fold to resemble tRNA(Ala) and it encodes a 'tag peptide', a short internal open reading frame. During trans-translation Ala-aminoacylated tmRNA acts like a tRNA, entering the A-site of stalled ribosomes, displacing the stalled mRNA. The ribosome then switches to translate the ORF on the tmRNA; the nascent peptide is terminated with the 'tag peptide' encoded by the tmRNA and targeted for degradation. The ribosome is freed to recommence translation, which seems to be the essential function of trans-translation. The protein is SsrA-binding protein of Lacticaseibacillus paracasei (strain ATCC 334 / BCRC 17002 / CCUG 31169 / CIP 107868 / KCTC 3260 / NRRL B-441) (Lactobacillus paracasei).